A 500-amino-acid chain; its full sequence is Protein dcd1B (500 aa).

Positions 1–20 (MNLIKLFIICCLLISITVKS) are cleaved as a signal peptide. N-linked (GlcNAc...) asparagine glycosylation is found at N284, N331, N441, N459, N474, and N475. Residues 464–500 (FSEQPPLPPPNNSSSSDSNSNSNSDSSSSSDSNSNSN) form a disordered region. Low complexity predominate over residues 475–500 (NSSSSDSNSNSNSDSSSSSDSNSNSN).

The protein resides in the secreted. The polypeptide is Protein dcd1B (dcd1B) (Dictyostelium discoideum (Social amoeba)).